Consider the following 87-residue polypeptide: Putative defensin-like protein 169 (87 aa).

A signal peptide spans 1-21 (MKKTFSFTVLILFVIPLLVTG). 4 disulfide bridges follow: C36-C86, C48-C74, C53-C80, and C57-C82.

It belongs to the DEFL family.

It localises to the secreted. This Arabidopsis thaliana (Mouse-ear cress) protein is Putative defensin-like protein 169.